The following is a 148-amino-acid chain: Large ribosomal subunit protein uL15A (148 aa).

2 stretches are compositionally biased toward basic residues: residues 1-13 (MPTH…KLRG) and 21-31 (RIGKHRKHPGG). The tract at residues 1–36 (MPTHVSKTRKLRGHVSAGHGRIGKHRKHPGGRGKAG) is disordered.

Belongs to the universal ribosomal protein uL15 family. Component of the large ribosomal subunit (LSU). Mature yeast ribosomes consist of a small (40S) and a large (60S) subunit. The 40S small subunit contains 1 molecule of ribosomal RNA (18S rRNA) and at least 33 different proteins. The large 60S subunit contains 3 rRNA molecules (25S, 5.8S and 5S rRNA) and at least 46 different proteins.

Its subcellular location is the cytoplasm. In terms of biological role, component of the ribosome, a large ribonucleoprotein complex responsible for the synthesis of proteins in the cell. The small ribosomal subunit (SSU) binds messenger RNAs (mRNAs) and translates the encoded message by selecting cognate aminoacyl-transfer RNA (tRNA) molecules. The large subunit (LSU) contains the ribosomal catalytic site termed the peptidyl transferase center (PTC), which catalyzes the formation of peptide bonds, thereby polymerizing the amino acids delivered by tRNAs into a polypeptide chain. The nascent polypeptides leave the ribosome through a tunnel in the LSU and interact with protein factors that function in enzymatic processing, targeting, and the membrane insertion of nascent chains at the exit of the ribosomal tunnel. This is Large ribosomal subunit protein uL15A (rpl2802) from Schizosaccharomyces pombe (strain 972 / ATCC 24843) (Fission yeast).